The sequence spans 1025 residues: Myosin phosphatase Rho-interacting protein (1025 aa).

Residues 2–383 form an interaction with F-actin region; that stretch reads SAAKENPCRK…DRRSTEPSVT (382 aa). Positions 43–150 constitute a PH 1 domain; sequence KPIYGGWLLL…WLEMLMVYPR (108 aa). Disordered regions lie at residues 152-302 and 317-383; these read NKQN…RRSQ and HMET…PSVT. Residues 179 to 189 are compositionally biased toward low complexity; the sequence is SSSSSSSSSSS. Residues Ser192, Ser217, Ser218, Ser220, Ser224, and Ser226 each carry the phosphoserine modification. The segment covering 217 to 236 has biased composition (low complexity); sequence SSLSPAQSPSQSQPPAASSL. A compositionally biased stretch (basic and acidic residues) spans 239–263; sequence PGLESKEEESAMSSDRMDCGRKVRV. A phosphoserine mark is found at Ser265 and Ser269. Residues 271-281 are compositionally biased toward basic and acidic residues; sequence EKTKQDLKAEE. The segment covering 284–294 has biased composition (pro residues); the sequence is LPPPLSPPSPS. Phosphoserine is present on residues Ser289 and Ser292. The residue at position 295 (Thr295) is a Phosphothreonine. The residue at position 326 (Ser326) is a Phosphoserine. Residues 332–348 are compositionally biased toward basic and acidic residues; it reads RQGRSEKRAFPRKRDFT. A Phosphothreonine modification is found at Thr348. Phosphoserine occurs at positions 362 and 365. The PH 2 domain maps to 387-483; it reads LNFKKGWLTK…WIQTIMKHVH (97 aa). Disordered regions lie at residues 485–545 and 560–591; these read TTAP…TFDW and VGGV…RREE. Ser493 bears the Phosphoserine mark. 2 stretches are compositionally biased toward basic and acidic residues: residues 524–545 and 567–589; these read PEQK…TFDW and DTHE…ARRR. The interval 546–824 is interaction with RHOA; it reads AEFRPIQQAL…SVQRELEVLS (279 aa). A Phosphoserine modification is found at Ser619. Thr646 bears the Phosphothreonine mark. Ser663 and Ser800 each carry phosphoserine. Residues 673-977 adopt a coiled-coil conformation; sequence HELTSLLEKE…AATEALGEKS (305 aa). The interval 824–879 is interaction with PPP1R12A; sequence SEQYSQKCLENAHLAQALEAERQALRQCQRENQELNAHNQELNNRLAAEITRLRTL. A phosphoserine mark is found at Ser891, Ser977, Ser993, Ser1014, and Ser1016.

As to quaternary structure, binds F-actin through its N-terminus. Interacts with MYZAP. Binds RHOA, PPP1R12A/MBS and PPP1R12C/MBS85 through adjacent coiled coil domains.

The protein localises to the cytoplasm. The protein resides in the cytoskeleton. Targets myosin phosphatase to the actin cytoskeleton. Required for the regulation of the actin cytoskeleton by RhoA and ROCK1. Depletion leads to an increased number of stress fibers in smooth muscle cells through stabilization of actin fibers by phosphorylated myosin. Overexpression of MRIP as well as its F-actin-binding region leads to disassembly of stress fibers in neuronal cells. The polypeptide is Myosin phosphatase Rho-interacting protein (MPRIP) (Homo sapiens (Human)).